Here is a 248-residue protein sequence, read N- to C-terminus: Ubiquinone biosynthesis O-methyltransferase (248 aa).

Positions 41, 72, 93, and 136 each coordinate S-adenosyl-L-methionine.

This sequence belongs to the methyltransferase superfamily. UbiG/COQ3 family.

The enzyme catalyses a 3-demethylubiquinol + S-adenosyl-L-methionine = a ubiquinol + S-adenosyl-L-homocysteine + H(+). It carries out the reaction a 3-(all-trans-polyprenyl)benzene-1,2-diol + S-adenosyl-L-methionine = a 2-methoxy-6-(all-trans-polyprenyl)phenol + S-adenosyl-L-homocysteine + H(+). It functions in the pathway cofactor biosynthesis; ubiquinone biosynthesis. In terms of biological role, O-methyltransferase that catalyzes the 2 O-methylation steps in the ubiquinone biosynthetic pathway. The polypeptide is Ubiquinone biosynthesis O-methyltransferase (Rhizobium rhizogenes (strain K84 / ATCC BAA-868) (Agrobacterium radiobacter)).